A 102-amino-acid polypeptide reads, in one-letter code: Monothiol glutaredoxin-S5 (102 aa).

The Glutaredoxin domain maps to 1 to 101; sequence MENLQKMISE…PMLKRAGALW (101 aa). [2Fe-2S] cluster is bound at residue cysteine 21. A Responsive for interaction with TGA factors motif is present at residues 99–102; the sequence is ALWL.

The protein belongs to the glutaredoxin family. CC-type subfamily.

It is found in the cytoplasm. It localises to the nucleus. Its function is as follows. May only reduce GSH-thiol disulfides, but not protein disulfides. The sequence is that of Monothiol glutaredoxin-S5 (GRXS5) from Arabidopsis thaliana (Mouse-ear cress).